The following is a 607-amino-acid chain: Chaperone protein DnaK (607 aa).

Thr-173 bears the Phosphothreonine; by autocatalysis mark. The span at 577–588 shows a compositional bias: low complexity; that stretch reads AQAQQGAEGAAS. Positions 577-607 are disordered; the sequence is AQAQQGAEGAASQDDDVVDADFTEVKDDDNK. The segment covering 589–598 has biased composition (acidic residues); that stretch reads QDDDVVDADF.

This sequence belongs to the heat shock protein 70 family.

In terms of biological role, acts as a chaperone. This Macrococcus caseolyticus (strain JCSC5402) (Macrococcoides caseolyticum) protein is Chaperone protein DnaK.